Consider the following 268-residue polypeptide: Tetratricopeptide repeat protein 33 (268 aa).

The segment at 14–34 (VSKQTVQQFEQDSEQADEDEV) is disordered. Over residues 24–34 (QDSEQADEDEV) the composition is skewed to acidic residues. TPR repeat units lie at residues 60 to 93 (SKRL…TPED), 94 to 127 (AVLY…RPIW), and 128 to 161 (WEAW…HPSE). Positions 249–268 (EGDDNPTSSSQSVLIKARGL) are disordered.

This is Tetratricopeptide repeat protein 33 (ttc33) from Danio rerio (Zebrafish).